Reading from the N-terminus, the 82-residue chain is M-zodatoxin-Lt3b (82 aa).

Positions 1 to 22 (MKTYAVLLALVVAFVCIAESTG) are cleaved as a signal peptide. Residues 23–61 (YPVEDLEDDELTELEAEALLEDLLEDLELEDLDYNEEAR) constitute a propeptide that is removed on maturation. The Processing quadruplet motif signature appears at 58–61 (EEAR). Ala-81 is subject to Alanine amide.

Cleavage of the propeptide depends on the processing quadruplet motif (XXXR, with at least one of X being E). Expressed by the venom gland.

It localises to the secreted. Its function is as follows. It has antimicrobial activity against Gram-positive bacteria (A.globiformis VKM Ac-1112 (MIC=0.7 uM), and B.subtilis VKM B-501 (MIC=2.9 uM)), Gram-negative bacteria (E.coli DH5-alpha (MIC=23 uM), E.coli MH1 (MIC=28 uM), and P.aeruginosa PAO1 (MIC&gt;45 uM)), and yeasts (P.pastoris GS115 (MIC=23 uM), and S.cerevisiae Y190 (MIC=23 uM)). Does not have hemolytic against rabbit erythrocytes. Causes paralysis, but is not lethal when injected into insect (M.domestica) larvae. The polypeptide is M-zodatoxin-Lt3b (Lachesana tarabaevi (Spider)).